Reading from the N-terminus, the 26-residue chain is uncharacterized protein (26 aa).

Post-translationally, phosphorylated by YfhK.

Functionally, probable member of a two-component regulatory system YfhA/YfhK. This is an uncharacterized protein from Klebsiella oxytoca.